The primary structure comprises 597 residues: Elongation factor 4 (597 aa).

Positions 2–184 (KNIRNFSIIA…EIVAKIPAPA (183 aa)) constitute a tr-type G domain. GTP is bound by residues 14–19 (DHGKST) and 131–134 (NKID).

This sequence belongs to the TRAFAC class translation factor GTPase superfamily. Classic translation factor GTPase family. LepA subfamily.

Its subcellular location is the cell inner membrane. It carries out the reaction GTP + H2O = GDP + phosphate + H(+). Functionally, required for accurate and efficient protein synthesis under certain stress conditions. May act as a fidelity factor of the translation reaction, by catalyzing a one-codon backward translocation of tRNAs on improperly translocated ribosomes. Back-translocation proceeds from a post-translocation (POST) complex to a pre-translocation (PRE) complex, thus giving elongation factor G a second chance to translocate the tRNAs correctly. Binds to ribosomes in a GTP-dependent manner. The polypeptide is Elongation factor 4 (Neisseria meningitidis serogroup A / serotype 4A (strain DSM 15465 / Z2491)).